Reading from the N-terminus, the 421-residue chain is Phosphoribosylamine--glycine ligase (421 aa).

One can recognise an ATP-grasp domain in the interval 108 to 314 (KEIMVKYNVP…FAQNIDDIMM (207 aa)). An ATP-binding site is contributed by 134-195 (IEEQGAPIVV…EEFLDGEEFS (62 aa)). Positions 284 and 286 each coordinate Mg(2+).

This sequence belongs to the GARS family. Mg(2+) is required as a cofactor. Mn(2+) serves as cofactor.

The catalysed reaction is 5-phospho-beta-D-ribosylamine + glycine + ATP = N(1)-(5-phospho-beta-D-ribosyl)glycinamide + ADP + phosphate + H(+). The protein operates within purine metabolism; IMP biosynthesis via de novo pathway; N(1)-(5-phospho-D-ribosyl)glycinamide from 5-phospho-alpha-D-ribose 1-diphosphate: step 2/2. This chain is Phosphoribosylamine--glycine ligase, found in Streptococcus pyogenes serotype M18 (strain MGAS8232).